A 198-amino-acid polypeptide reads, in one-letter code: Vacuolar iron transporter homolog 4 (198 aa).

The Cytoplasmic segment spans residues 1 to 32; it reads MESNNNNLNLDMEKDQETTFDYSKRAQWLRAA. A helical membrane pass occupies residues 33 to 53; sequence VLGANDGLVSTASLMMGIGAV. The Vacuolar portion of the chain corresponds to 54–60; the sequence is KQDVRIM. A helical membrane pass occupies residues 61–81; it reads LLTGFAGLVAGACSMAIGEFI. At 82-114 the chain is on the cytoplasmic side; that stretch reads SVYSQYDIEVAQMKRESGGETKKEKLPSPTQAA. The helical transmembrane segment at 115 to 135 threads the bilayer; the sequence is IASALAFTLGAIVPLLAAAFV. The Vacuolar segment spans residues 136–141; that stretch reads KEYKVR. Residues 142–162 traverse the membrane as a helical segment; that stretch reads IGVIVAAVTLALVMFGWLGAV. Topologically, residues 163-174 are cytoplasmic; sequence LGKAPVVKSLVR. A helical transmembrane segment spans residues 175-195; that stretch reads VLIGGWLAMAITFGFTKLVGS. The Vacuolar portion of the chain corresponds to 196–198; it reads HGL.

Belongs to the CCC1 family.

It localises to the vacuole membrane. The catalysed reaction is Fe(2+)(in) = Fe(2+)(out). Functionally, probable vacuolar iron transporter that may be involved in the regulation of iron distribution throughout the plant. This Arabidopsis thaliana (Mouse-ear cress) protein is Vacuolar iron transporter homolog 4.